Here is a 428-residue protein sequence, read N- to C-terminus: Trigger factor (428 aa).

The PPIase FKBP-type domain occupies 163–248; that stretch reads GDTAVIDFEG…IKEIKVKELP (86 aa).

The protein belongs to the FKBP-type PPIase family. Tig subfamily.

The protein resides in the cytoplasm. It catalyses the reaction [protein]-peptidylproline (omega=180) = [protein]-peptidylproline (omega=0). Its function is as follows. Involved in protein export. Acts as a chaperone by maintaining the newly synthesized protein in an open conformation. Functions as a peptidyl-prolyl cis-trans isomerase. This is Trigger factor from Ruminiclostridium cellulolyticum (strain ATCC 35319 / DSM 5812 / JCM 6584 / H10) (Clostridium cellulolyticum).